The following is a 502-amino-acid chain: MPGETITLQVGQCGNQVGLQYWQQLATEHGIQSDGSSTPYPKDINDLQLQELNNSGSSPQSYPQQTKPNGKYRNDHPELFFTLSDSNTYTPRSILIDMEPSVIAKSTSALPMFNPRNVHLSNQGNGAANNWINGYKYGTEEEETLLNLIDREVDKCDNLSNFQLFHSVAGGTGSGVGSKMLEVISDRYGHKKLLNTFSIFPSNEDTSDVVVQPYNTILTLKRLIDYSDATFVFHNDSLNRIENILFNNNSNIQHDDNDLFLGANKLIALVSASVSNPLRFPGYMYSSMESIVSNLIPTPDLKFLTSSIAPFSTQKHNYLNEYDMLLELSNDRYKTNRVGGDTSYISMLNYLIGYNLDQREIRKGILKSQQRISFVPWVARSVLVVHGKKSPYLKNTNLEGIQVTNNTSMIDVFTKILKQFDLLIKRKAYLNRYYSSVEEENEVMEMFNESRESVKSIIDEYKACKEITYLDDDDEDDLEDGDGGGGGNGNGYNNIDDADMGI.

Residues 51 to 68 (ELNNSGSSPQSYPQQTKP) are compositionally biased toward polar residues. Positions 51–73 (ELNNSGSSPQSYPQQTKPNGKYR) are disordered. Residue 169-175 (AGGTGSG) coordinates GTP. A compositionally biased stretch (acidic residues) spans 473–482 (DDEDDLEDGD). The segment at 473-502 (DDEDDLEDGDGGGGGNGNGYNNIDDADMGI) is disordered.

The protein belongs to the tubulin family.

The protein resides in the cytoplasm. It is found in the cytoskeleton. Its subcellular location is the microtubule organizing center. It localises to the spindle pole body. Tubulin is the major constituent of microtubules. The gamma chain is found at microtubule organizing centers (MTOC) such as the spindle poles or the centrosome, suggesting that it is involved in the minus-end nucleation of microtubule assembly. The sequence is that of Tubulin gamma chain (TUB4) from Candida albicans (Yeast).